A 174-amino-acid polypeptide reads, in one-letter code: Transcriptional repressor NrdR (174 aa).

Residues 3–34 (CPFCQHNDTRVIDSRVSEDGTTIRRRRECEAC) fold into a zinc finger. The region spanning 49–139 (PTVVKSDGGR…VYRSFQDVAD (91 aa)) is the ATP-cone domain.

This sequence belongs to the NrdR family. The cofactor is Zn(2+).

Its function is as follows. Negatively regulates transcription of bacterial ribonucleotide reductase nrd genes and operons by binding to NrdR-boxes. This is Transcriptional repressor NrdR from Xanthomonas campestris pv. campestris (strain 8004).